The chain runs to 258 residues: MLILISPAKTLDYQSPLTTTRYTLPELLDNAQQLIHEARKLTPPQISSLMRISDKLAGINAARFHDWQPDFTPENARQAILAFKGDVYTGLQAETFSEDDFDFAQQHLRMLSGLYGVLRPLDLMQPYRLEMGIRLENARGKDLYQFWGDIITNKLNEALAAQGDNVVINLASDEYFKSVKPKKLNAEIIKPVFLDEKNGKFKIISFYAKKARGLMSRFIIENRLTKPEQLTGFNSEGYFFDEASSSNGELVFKRYEQR.

This sequence belongs to the UPF0246 family.

This is UPF0246 protein YaaA from Escherichia coli O127:H6 (strain E2348/69 / EPEC).